The primary structure comprises 224 residues: Propanediol dehydratase medium subunit (224 aa).

Residues 1-18 form a targets protein to the BMC region; it reads MEINEKLLRQIIEDVLRD.

Belongs to the diol/glycerol dehydratase medium subunit family. In terms of assembly, the propanediol dehydratase enzyme is a heterotrimeric complex composed of a large (PduC), a medium (PduD) and a small (PduE) subunit. Adenosylcob(III)alamin serves as cofactor.

It is found in the bacterial microcompartment. It catalyses the reaction propane-1,2-diol = propanal + H2O. It functions in the pathway polyol metabolism; 1,2-propanediol degradation. Inhibited by glycerol. Functionally, part of the PduCDE complex that catalyzes the dehydration of 1,2-propanediol (1,2-PD) to propionaldehyde. Required for S.typhimurium growth on 1,2-PD as the sole carbon and energy source. This subunit is directly targeted to the bacterial microcompartment (BMC) dedicated to 1,2-PD degradation, and is also responsible for targeting the other 2 subunits (pduC and pduE). Its function is as follows. The 1,2-PD-specific bacterial microcompartment (BMC) concentrates low levels of 1,2-PD catabolic enzymes, concentrates volatile reaction intermediates thus enhancing pathway flux and keeps the level of toxic, mutagenic propionaldehyde low. The chain is Propanediol dehydratase medium subunit from Salmonella typhimurium (strain LT2 / SGSC1412 / ATCC 700720).